The sequence spans 557 residues: MKTILRASRIGRVILRYRLDALLEGTPAERWLRLAKPFVPRASAEIAAQSRGARLRLALQELGPIFVKFGQILSTRRDLIPPDVAEELTLLQDRVKPFDGEAARLIVERALGLPVSVAFAAFDTTPLASASIAQVHAATLPPDANGLRREVVVKVLRPDIERQIDADIALLHSLATLVERTHPRADKIRPREVVAEIEGTLSAELDLQREGANASVLRRFWEGSDDLYVPEVIWSHTAERALTLERVYGIPSDDVAKLDAAGIDRKALAAKGVRVFYTQVFRDNFFHADAHAGNIWVDSDPERCLNPRFIALDFGIMGQLSQEDQYYLAENFMAIFHKDYRRMAELHVEAGWMPSNVRIDELEAAARSVCEPYFTRPLSEISLAEVLIKLFRVAQRYELTLQPQLILLQKTLLNIEGVGRQLDPKLDIWAVARPVLERILRERYSPRRVLGELRKRLPEIMTHAPDMPRLVHSWLKQQVEGRHQLDIRSSELRALDLSLRKLQTRVVTAITGSGLLVVAAVLYGLHPNGWYLGTVPVWSWISGGAGSAALLIAWLRR.

The Protein kinase domain maps to 121–509 (AFDTTPLASA…RKLQTRVVTA (389 aa)). ATP-binding positions include 127–135 (LASASIAQV) and Lys154. Asp289 serves as the catalytic Proton acceptor. 2 helical membrane passes run 506–526 (VVTA…YGLH) and 535–555 (VPVW…IAWL).

Belongs to the ABC1 family. UbiB subfamily.

It is found in the cell inner membrane. It participates in cofactor biosynthesis; ubiquinone biosynthesis [regulation]. Is probably a protein kinase regulator of UbiI activity which is involved in aerobic coenzyme Q (ubiquinone) biosynthesis. The polypeptide is Probable protein kinase UbiB (Xanthomonas campestris pv. campestris (strain B100)).